Consider the following 69-residue polypeptide: uncharacterized protein (69 aa).

A helical transmembrane segment spans residues 32–54 (MLGAIDVAVAVASVPTLFVVTAI).

Its subcellular location is the membrane. This is an uncharacterized protein from Sinorhizobium fredii (strain NBRC 101917 / NGR234).